A 912-amino-acid polypeptide reads, in one-letter code: Rho guanine nucleotide exchange factor 1 (912 aa).

The RGSL domain maps to 41-232 (EQNSQFQSLE…GLYMRHLGVR (192 aa)). The segment at 248–413 (KVMGNRRSDE…PDTLHSLPKS (166 aa)) is disordered. Basic and acidic residues predominate over residues 283–313 (DFRHLKAEVDAEKPGATDRKGGVGMPSRDRN). A compositionally biased stretch (acidic residues) spans 365–381 (STDEGAETESPEPGDEG). Residues S374 and S409 each carry the phosphoserine modification. The 190-residue stretch at 416–605 (KRQEVISELL…REILHHVNQA (190 aa)) folds into the DH domain. A PH domain is found at 647–760 (KLVHEGPLTW…WCALITETAG (114 aa)). T695 carries the post-translational modification Phosphothreonine. Y738 bears the Phosphotyrosine; by JAK2 mark. Disordered stretches follow at residues 763 to 802 (KVPA…PADA) and 841 to 865 (AEED…LSPA). Positions 777-789 (PSSTREPLLSSSE) are enriched in low complexity. Position 863 is a phosphoserine (S863). Positions 865–896 (ARTQEIQENLLSLEETMKQLEELEEEFCRLRP) form a coiled coil.

In terms of assembly, interacts with RHOA, GNA12 and GNA13. Homooligomerizes through the coiled coil region. May interact with CCPG1. Interacts with CTNNAL1. In terms of processing, phosphorylated by PKCA. Angiotensin-2 induced Tyr-738 phosphorylation is mediated by JAK2. As to expression, ubiquitously expressed.

The protein localises to the cytoplasm. The protein resides in the membrane. Seems to play a role in the regulation of RhoA GTPase by guanine nucleotide-binding alpha-12 (GNA12) and alpha-13 (GNA13) subunits. Acts as a GTPase-activating protein (GAP) for GNA12 and GNA13, and as guanine nucleotide exchange factor (GEF) for RhoA GTPase. Activated G alpha 13/GNA13 stimulates the RhoGEF activity through interaction with the RGS-like domain. This GEF activity is inhibited by binding to activated GNA12. Mediates angiotensin-2-induced RhoA activation. In lymphoid follicles, may trigger activation of GNA13 as part of S1PR2-dependent signaling pathway that leads to inhibition of germinal center (GC) B cell growth and migration outside the GC niche. The chain is Rho guanine nucleotide exchange factor 1 (ARHGEF1) from Homo sapiens (Human).